Consider the following 105-residue polypeptide: MTIMITTGNSFEGKVIKQYLGIVRGIVVRSPTISQGLMGGLKSIVGGKIGAYSQMCEHAREEAFQLMIEHAQALNANGIIAMRYDTGEIGQAGTEVLCYGTAVII.

Belongs to the UPF0145 family.

The protein is UPF0145 protein lpl0253 of Legionella pneumophila (strain Lens).